The chain runs to 330 residues: Aspartate--ammonia ligase (330 aa).

Belongs to the class-II aminoacyl-tRNA synthetase family. AsnA subfamily.

The protein resides in the cytoplasm. It carries out the reaction L-aspartate + NH4(+) + ATP = L-asparagine + AMP + diphosphate + H(+). Its pathway is amino-acid biosynthesis; L-asparagine biosynthesis; L-asparagine from L-aspartate (ammonia route): step 1/1. In Streptococcus pneumoniae serotype 19F (strain G54), this protein is Aspartate--ammonia ligase.